The chain runs to 285 residues: Pantothenate synthetase (285 aa).

30–37 provides a ligand contact to ATP; that stretch reads MGFLHEGH. Histidine 37 (proton donor) is an active-site residue. A (R)-pantoate-binding site is contributed by glutamine 61. Glutamine 61 contacts beta-alanine. 147–150 is an ATP binding site; the sequence is GQKD. Glutamine 153 contributes to the (R)-pantoate binding site. Residues valine 176 and 184–187 contribute to the ATP site; that span reads KSSR.

This sequence belongs to the pantothenate synthetase family. As to quaternary structure, homodimer.

The protein localises to the cytoplasm. The enzyme catalyses (R)-pantoate + beta-alanine + ATP = (R)-pantothenate + AMP + diphosphate + H(+). Its pathway is cofactor biosynthesis; (R)-pantothenate biosynthesis; (R)-pantothenate from (R)-pantoate and beta-alanine: step 1/1. Catalyzes the condensation of pantoate with beta-alanine in an ATP-dependent reaction via a pantoyl-adenylate intermediate. The chain is Pantothenate synthetase from Listeria monocytogenes serovar 1/2a (strain ATCC BAA-679 / EGD-e).